A 498-amino-acid chain; its full sequence is Pre-glycoprotein polyprotein GP complex (498 aa).

Gly-2 is lipidated: N-myristoyl glycine; by host. Over 2–17 (GQIVTMFEALPHIIDE) the chain is Extracellular. A helical membrane pass occupies residues 18-33 (VINIVIIVLIVITGIK). Residues 34-58 (AVYNFATCGIFALISFLLLAGRSCG) lie on the Cytoplasmic side of the membrane. Cys-57 serves as a coordination point for Zn(2+). At 59 to 438 (MYGLKGPDIY…QGSTPLALMD (380 aa)) the chain is on the extracellular side. Residues Asn-85, Asn-95, Asn-114, Asn-124, and Asn-171 are each glycosylated (N-linked (GlcNAc...) asparagine; by host). Disulfide bonds link Cys-92–Cys-239, Cys-123–Cys-160, Cys-184–Cys-220, Cys-285–Cys-298, Cys-307–Cys-316, and Cys-370–Cys-391. N-linked (GlcNAc...) asparagine; by host glycosylation is present at Asn-232. 3 N-linked (GlcNAc...) asparagine; by host glycosylation sites follow: Asn-371, Asn-396, and Asn-401. Residues 439-459 (LLMFSTSAYLVSIFLHLVKIP) traverse the membrane as a helical segment. Residues 460 to 498 (THRHIKGGSCPKPHRLTNKGICSCGAFKVPGVKTVWKRR) are Cytoplasmic-facing. Residues His-461, His-463, Cys-469, His-473, Cys-481, and Cys-483 each coordinate Zn(2+).

Belongs to the arenaviridae GPC protein family. In terms of assembly, interacts with glycoprotein G2. Part of the GP complex (GP-C) together with glycoprotein G1 and glycoprotein G2. The GP-complex interacts with protein Z, which interacts with ribonucleocapsid; these interactions may induce virion budding. As to quaternary structure, homotrimer; disulfide-linked. In pre-fusion state, G1 homotrimers bind G2 homotrimers via ionic interactions. Part of the GP complex (GP-C) together with glycoprotein G2 and the stable signal peptide. Interacts with the primary host receptor DAG1 on the cell surface. The GP-complex interacts with protein Z, which interacts with ribonucleocapsid; these interactions may induce virion budding. Homotrimer. Interacts with the stable signal peptide. In pre-fusion state, G2 homotrimers bind G1 homotrimers via ionic interactions. Part of the GP complex (GP-C) together with glycoprotein G1 and the stable signal peptide. Acidification in the endosome triggers rearrangements, which ultimately leads to a 6 helix bundle formed by the two heptad repeat domains (HR1 and HR2) in post-fusion state. The GP-complex interacts with protein Z, which interacts with ribonucleocapsid; these interactions may induce virion budding. Specific enzymatic cleavages in vivo yield mature proteins. GP-C polyprotein is cleaved in the endoplasmic reticulum by the host protease MBTPS1. Only cleaved glycoprotein is incorporated into virions. In terms of processing, the SSP remains stably associated with the GP complex following cleavage by signal peptidase and plays crucial roles in the trafficking of GP through the secretory pathway. Post-translationally, myristoylation is necessary for GP2-mediated fusion activity. Inhibition of host myristoylation by the compound DDD85646 leads to the abrogation of GP2-mediated fusion upon exposure to low pH and inhibition of viral multiplication.

It is found in the virion membrane. Its subcellular location is the host endoplasmic reticulum membrane. It localises to the host Golgi apparatus membrane. The protein localises to the host cell membrane. Functions as a cleaved signal peptide that is retained as the third component of the GP complex (GP-C). Helps to stabilize the spike complex in its native conformation. The SSP is required for efficient glycoprotein expression, post-translational maturation cleavage of G1 and G2, glycoprotein transport to the cell surface plasma membrane, formation of infectious virus particles, and acid pH-dependent glycoprotein-mediated cell fusion. Functionally, forms the virion spikes together with glycoprotein G2. The glycoprotein spike trimers are connected to the underlying matrix. Interacts with the host receptor. Mediates virus attachment to the host primary receptor alpha-dystroglycan DAG1 (alpha-DG) at the cell surface. Down-modulates host DAG1. In terms of biological role, forms the virion spikes together with glycoprotein G1. The glycoprotein spike trimers are connected to the underlying matrix. Class I viral fusion protein that directs fusion of viral and host endosomal membranes, leading to delivery of the nucleocapsid into the cytoplasm. Membrane fusion is mediated by irreversible conformational changes induced by acidification. In Homo sapiens (Human), this protein is Pre-glycoprotein polyprotein GP complex.